Reading from the N-terminus, the 209-residue chain is Imidazole glycerol phosphate synthase subunit HisH (209 aa).

The 205-residue stretch at 1–205 (MIAIIDYGMG…KGVVETWKSS (205 aa)) folds into the Glutamine amidotransferase type-1 domain. Cysteine 79 serves as the catalytic Nucleophile. Active-site residues include histidine 180 and glutamate 182.

In terms of assembly, heterodimer of HisH and HisF.

The protein resides in the cytoplasm. It carries out the reaction 5-[(5-phospho-1-deoxy-D-ribulos-1-ylimino)methylamino]-1-(5-phospho-beta-D-ribosyl)imidazole-4-carboxamide + L-glutamine = D-erythro-1-(imidazol-4-yl)glycerol 3-phosphate + 5-amino-1-(5-phospho-beta-D-ribosyl)imidazole-4-carboxamide + L-glutamate + H(+). The enzyme catalyses L-glutamine + H2O = L-glutamate + NH4(+). The protein operates within amino-acid biosynthesis; L-histidine biosynthesis; L-histidine from 5-phospho-alpha-D-ribose 1-diphosphate: step 5/9. IGPS catalyzes the conversion of PRFAR and glutamine to IGP, AICAR and glutamate. The HisH subunit catalyzes the hydrolysis of glutamine to glutamate and ammonia as part of the synthesis of IGP and AICAR. The resulting ammonia molecule is channeled to the active site of HisF. This chain is Imidazole glycerol phosphate synthase subunit HisH, found in Bacillus anthracis (strain CDC 684 / NRRL 3495).